Consider the following 110-residue polypeptide: Large ribosomal subunit protein uL22 (110 aa).

Belongs to the universal ribosomal protein uL22 family. As to quaternary structure, part of the 50S ribosomal subunit.

Functionally, this protein binds specifically to 23S rRNA; its binding is stimulated by other ribosomal proteins, e.g. L4, L17, and L20. It is important during the early stages of 50S assembly. It makes multiple contacts with different domains of the 23S rRNA in the assembled 50S subunit and ribosome. The globular domain of the protein is located near the polypeptide exit tunnel on the outside of the subunit, while an extended beta-hairpin is found that lines the wall of the exit tunnel in the center of the 70S ribosome. In Histophilus somni (strain 129Pt) (Haemophilus somnus), this protein is Large ribosomal subunit protein uL22.